The following is a 237-amino-acid chain: Riboflavin kinase (237 aa).

Positions 1–23 (MSLPNPDNRPLLIGPPTGPEAPF) are disordered. Mg(2+) is bound by residues Thr46 and Asn48. Positions 82-126 (VLYQKPPTSEPVMMDPVQQQQQQQQQQRNQQQQQEGGVGSAQQEK) are disordered. Residues 99–115 (QQQQQQQQQQRNQQQQQ) show a composition bias toward low complexity. The active-site Nucleophile is Glu158.

This sequence belongs to the flavokinase family. Zn(2+) serves as cofactor. Mg(2+) is required as a cofactor.

It carries out the reaction riboflavin + ATP = FMN + ADP + H(+). It functions in the pathway cofactor biosynthesis; FMN biosynthesis; FMN from riboflavin (ATP route): step 1/1. Functionally, catalyzes the phosphorylation of riboflavin (vitamin B2) to form flavin mononucleotide (FMN) coenzyme. This chain is Riboflavin kinase (fmn1), found in Neurospora crassa (strain ATCC 24698 / 74-OR23-1A / CBS 708.71 / DSM 1257 / FGSC 987).